The primary structure comprises 581 residues: 2-hydroxyacyl-CoA lyase 1 (581 aa).

A phosphoserine mark is found at Ser-4 and Ser-6. Thiamine diphosphate is bound at residue Glu-63. Residues Lys-354, Lys-361, and Lys-368 each carry the N6-succinyllysine modification. A thiamine pyrophosphate binding region spans residues Thr-404–Gly-487. Residues Asp-458 and Asn-485 each contribute to the Mg(2+) site. Residues Ser-579–Met-581 carry the Microbody targeting signal motif.

This sequence belongs to the TPP enzyme family. In terms of assembly, homotetramer. It depends on Mg(2+) as a cofactor. Thiamine diphosphate is required as a cofactor. Predominanly expressed in liver.

The protein localises to the peroxisome. It catalyses the reaction a 2-hydroxy-3-methyl fatty acyl-CoA = a 2-methyl-branched fatty aldehyde + formyl-CoA. It carries out the reaction an (R)-2-hydroxy-long-chain-fatty acyl-CoA = a long-chain fatty aldehyde + formyl-CoA. The enzyme catalyses 2-hydroxy-3-methylhexadecanoyl-CoA = 2-methylpentadecanal + formyl-CoA. The catalysed reaction is 2-hydroxyoctadecanoyl-CoA = heptadecanal + formyl-CoA. It catalyses the reaction 2-hydroxyphytanoyl-CoA = 2,6,10,14-tetramethylpentadecanal + formyl-CoA. It functions in the pathway lipid metabolism; fatty acid metabolism. In terms of biological role, peroxisomal 2-OH acyl-CoA lyase involved in the cleavage (C1 removal) reaction in the fatty acid alpha-oxydation in a thiamine pyrophosphate (TPP)-dependent manner. Involved in the degradation of 3-methyl-branched fatty acids like phytanic acid and the shortening of 2-hydroxy long-chain fatty acids. Plays a significant role in the biosynthesis of heptadecanal in the liver. This chain is 2-hydroxyacyl-CoA lyase 1 (Hacl1), found in Mus musculus (Mouse).